The primary structure comprises 395 residues: Multidrug resistance protein MdtL (395 aa).

Helical transmembrane passes span 4-24, 42-62, 69-89, 93-113, 131-151, 158-178, 217-237, 247-267, 271-291, 295-315, 333-353, and 358-378; these read FLLC…MYLV, IAFS…GKIA, PVAI…SRAS, LFLS…VVAF, LLNG…HLIM, SLFY…LFIL, VSVI…VMGF, ALTA…LGLF, TLML…SLAH, VTLF…GVAM, LGIA…ILGI, and MLIG…FSVA.

It belongs to the major facilitator superfamily. DHA1 family. MdtL (TC 2.A.1.2.22) subfamily.

The protein localises to the cell inner membrane. This Salmonella agona (strain SL483) protein is Multidrug resistance protein MdtL.